A 1371-amino-acid polypeptide reads, in one-letter code: DNA-directed RNA polymerase subunit beta' (1371 aa).

The Zn(2+) site is built by Cys-71, Cys-73, Cys-86, and Cys-89. 3 residues coordinate Mg(2+): Asp-461, Asp-463, and Asp-465. Residues Cys-803, Cys-877, Cys-884, and Cys-887 each coordinate Zn(2+).

This sequence belongs to the RNA polymerase beta' chain family. In terms of assembly, the RNAP catalytic core consists of 2 alpha, 1 beta, 1 beta' and 1 omega subunit. When a sigma factor is associated with the core the holoenzyme is formed, which can initiate transcription. It depends on Mg(2+) as a cofactor. Requires Zn(2+) as cofactor.

The enzyme catalyses RNA(n) + a ribonucleoside 5'-triphosphate = RNA(n+1) + diphosphate. Functionally, DNA-dependent RNA polymerase catalyzes the transcription of DNA into RNA using the four ribonucleoside triphosphates as substrates. The chain is DNA-directed RNA polymerase subunit beta' from Thermodesulfovibrio yellowstonii (strain ATCC 51303 / DSM 11347 / YP87).